Here is a 201-residue protein sequence, read N- to C-terminus: Superoxide dismutase [Mn/Fe] (201 aa).

Residues histidine 27, histidine 81, aspartate 162, and histidine 166 each contribute to the Fe(3+) site. Residues histidine 27, histidine 81, aspartate 162, and histidine 166 each coordinate Mn(2+).

The protein belongs to the iron/manganese superoxide dismutase family. As to quaternary structure, homodimer. Requires Mn(2+) as cofactor. Fe(3+) is required as a cofactor.

It carries out the reaction 2 superoxide + 2 H(+) = H2O2 + O2. Functionally, destroys superoxide anion radicals which are normally produced within the cells and which are toxic to biological systems. Catalyzes the dismutation of superoxide anion radicals into O2 and H2O2 by successive reduction and oxidation of the transition metal ion at the active site. This Staphylococcus carnosus protein is Superoxide dismutase [Mn/Fe] (sodA).